We begin with the raw amino-acid sequence, 205 residues long: UPF0548 protein At2g17695 (205 aa).

It belongs to the UPF0548 family.

This is UPF0548 protein At2g17695 from Arabidopsis thaliana (Mouse-ear cress).